Consider the following 378-residue polypeptide: uncharacterized protein (378 aa).

A compositionally biased stretch (low complexity) spans 150 to 176 (TTTATTSNNRFNNNNSNNNNINNNNDN). Residues 150-187 (TTTATTSNNRFNNNNSNNNNINNNNDNNNKEQKKESRC) form a disordered region. The span at 177–187 (NNKEQKKESRC) shows a compositional bias: basic and acidic residues.

This is an uncharacterized protein from Dictyostelium discoideum (Social amoeba).